A 94-amino-acid chain; its full sequence is Ferredoxin-like protein (94 aa).

2 4Fe-4S ferredoxin-type domains span residues 20-52 (PHIRIKDPDHCTELSEKQCTVCCPAGCYTRETN) and 53-83 (GKVTLVTDGCLECGTCRIICQDSGNLEWEWP).

This sequence to ferredoxins from P.putida and C.tartarivorum, ferredoxin I from A.vinelandii, ferredoxin II from D.desulfuricans.

Functionally, could be a 3Fe-4S cluster-containing protein. This is Ferredoxin-like protein (fixX) from Azotobacter vinelandii.